We begin with the raw amino-acid sequence, 382 residues long: Anhydro-N-acetylmuramic acid kinase (382 aa).

9-16 (GTSLDGID) serves as a coordination point for ATP.

Belongs to the anhydro-N-acetylmuramic acid kinase family.

The catalysed reaction is 1,6-anhydro-N-acetyl-beta-muramate + ATP + H2O = N-acetyl-D-muramate 6-phosphate + ADP + H(+). It functions in the pathway amino-sugar metabolism; 1,6-anhydro-N-acetylmuramate degradation. The protein operates within cell wall biogenesis; peptidoglycan recycling. Functionally, catalyzes the specific phosphorylation of 1,6-anhydro-N-acetylmuramic acid (anhMurNAc) with the simultaneous cleavage of the 1,6-anhydro ring, generating MurNAc-6-P. Is required for the utilization of anhMurNAc either imported from the medium or derived from its own cell wall murein, and thus plays a role in cell wall recycling. The chain is Anhydro-N-acetylmuramic acid kinase from Bacillus thuringiensis subsp. konkukian (strain 97-27).